A 53-amino-acid polypeptide reads, in one-letter code: Abaecin (53 aa).

Residues 1–19 (MKVVIFIFALLATICAAFA) form the signal peptide.

It is found in the secreted. Functionally, this peptide has bactericidal activity. The chain is Abaecin from Apis mellifera (Honeybee).